A 464-amino-acid chain; its full sequence is Juvenile hormone epoxide hydrolase 1 (464 aa).

The chain crosses the membrane as a helical span at residues 7-27 (MLIFAAIAGIAVLYYQITKEL). Catalysis depends on Asp-224, which acts as the Nucleophile. Tyr-370 (proton donor) is an active-site residue. His-427 serves as the catalytic Proton acceptor.

The protein belongs to the peptidase S33 family. As to expression, developing oocytes, fat body and midgut epithelium of adults.

The protein resides in the microsome membrane. Its subcellular location is the endoplasmic reticulum membrane. The enzyme catalyses cis-stilbene oxide + H2O = (1R,2R)-hydrobenzoin. It carries out the reaction 1-(4-methoxyphenyl)-N-methyl-N-[(3-methyloxetan-3-yl)methyl]methanamine + H2O = 2-{[(4-methoxybenzyl)(methyl)amino]methyl}-2-methylpropane-1,3-diol. Its function is as follows. Catalyzes juvenile hormone hydrolysis. In Ctenocephalides felis (Cat flea), this protein is Juvenile hormone epoxide hydrolase 1.